The sequence spans 178 residues: ATP synthase subunit delta (178 aa).

The protein belongs to the ATPase delta chain family. F-type ATPases have 2 components, F(1) - the catalytic core - and F(0) - the membrane proton channel. F(1) has five subunits: alpha(3), beta(3), gamma(1), delta(1), epsilon(1). F(0) has three main subunits: a(1), b(2) and c(10-14). The alpha and beta chains form an alternating ring which encloses part of the gamma chain. F(1) is attached to F(0) by a central stalk formed by the gamma and epsilon chains, while a peripheral stalk is formed by the delta and b chains.

The protein localises to the cell membrane. In terms of biological role, f(1)F(0) ATP synthase produces ATP from ADP in the presence of a proton or sodium gradient. F-type ATPases consist of two structural domains, F(1) containing the extramembraneous catalytic core and F(0) containing the membrane proton channel, linked together by a central stalk and a peripheral stalk. During catalysis, ATP synthesis in the catalytic domain of F(1) is coupled via a rotary mechanism of the central stalk subunits to proton translocation. This protein is part of the stalk that links CF(0) to CF(1). It either transmits conformational changes from CF(0) to CF(1) or is implicated in proton conduction. The protein is ATP synthase subunit delta of Streptococcus sanguinis (strain SK36).